A 458-amino-acid chain; its full sequence is Ammonium transporter Rh type B (458 aa).

At 1–13 (MAGSSRRAGGRRL) the chain is on the cytoplasmic side. Residues 14-34 (QLPLLCLLLQGATAILFAVFV) traverse the membrane as a helical segment. At 35 to 61 (RYNHETDAALWHWGNHSNPDNEFYFRY) the chain is on the extracellular side. An N-linked (GlcNAc...) asparagine glycan is attached at Asn-49. Residues 62 to 82 (PSFQDVHTMIFVGFGFLMAFL) traverse the membrane as a helical segment. At 83 to 86 (QRYG) the chain is on the cytoplasmic side. A helical membrane pass occupies residues 87–107 (FSSVGFTFLLAAFALQWSTLV). Residues 108-124 (QGFLHTFHGGHIHIGVE) lie on the Extracellular side of the membrane. A helical membrane pass occupies residues 125 to 145 (SMINADFCAGAVLISFGAILG). Topologically, residues 146–149 (KTGP) are cytoplasmic. A helical membrane pass occupies residues 150 to 170 (AQLLLMALLEVVLFGLNEFVL). Residues 171–178 (LSLLGVKD) are Extracellular-facing. Residues 179–201 (AGGSMTIHTFGAYFGLVLSRVLY) form a helical membrane-spanning segment. Over 202-219 (RPQLEKSKHRQSSVYHSD) the chain is Cytoplasmic. Residues 220–240 (LFAMIGTIFLWIFWPSFNSAP) form a helical membrane-spanning segment. At 241–251 (TPLGDGQHRTA) the chain is on the extracellular side. A helical transmembrane segment spans residues 252–272 (LNTYYSLTASTLSTFALSALV). The Cytoplasmic portion of the chain corresponds to 273-282 (GRDGRLDMVH). Residues 283-303 (VQNAALAGGVVVGTSAEMMLT) form a helical membrane-spanning segment. A topological domain (extracellular) is located at residue Pro-304. Residues 305-325 (FGALAAGFLAGTVSTLGFKFF) form a helical membrane-spanning segment. Over 326–346 (TPILESKFKIQDTCGVHNLHG) the chain is Cytoplasmic. A helical transmembrane segment spans residues 347-367 (MPGVLGALLGVLVAGLATHDS). Topologically, residues 368 to 393 (YGEGLESVFPLIAEGQRSSTSQALHQ) are extracellular. A helical transmembrane segment spans residues 394 to 414 (LFGLFVTLIFASVGGGLGGLL). Over 415 to 458 (LRLPFLDSPPDSQCYEDQIYWEVPEEHADLAQGSLRPEEPDTQA) the chain is Cytoplasmic. The interaction with ANK3 stretch occupies residues 416 to 424 (RLPFLDSPP). The Basolateral sorting signal motif lies at 429–432 (YEDQ).

The protein belongs to the ammonium transporter (TC 2.A.49) family. Rh subfamily. In terms of assembly, interacts (via C-terminus) with ANK2 and ANK3; required for targeting to the basolateral membrane. In terms of processing, N-glycosylated.

It is found in the cell membrane. The protein localises to the basolateral cell membrane. It catalyses the reaction NH4(+)(in) = NH4(+)(out). The catalysed reaction is methylamine(out) = methylamine(in). The enzyme catalyses CO2(out) = CO2(in). Its function is as follows. Ammonium transporter involved in the maintenance of acid-base homeostasis. Transports ammonium and its related derivative methylammonium across the basolateral plasma membrane of epithelial cells likely contributing to renal transepithelial ammonia transport and ammonia metabolism. May transport either NH4(+) or NH3 ammonia species predominantly mediating an electrogenic NH4(+) transport. May act as a CO2 channel providing for renal acid secretion. The sequence is that of Ammonium transporter Rh type B (RHBG) from Sus scrofa (Pig).